The primary structure comprises 161 residues: Large ribosomal subunit protein uL11 (161 aa).

It belongs to the universal ribosomal protein uL11 family. Part of the ribosomal stalk of the 50S ribosomal subunit. Interacts with L10 and the large rRNA to form the base of the stalk. L10 forms an elongated spine to which L12 dimers bind in a sequential fashion forming a multimeric L10(L12)X complex.

Functionally, forms part of the ribosomal stalk which helps the ribosome interact with GTP-bound translation factors. The chain is Large ribosomal subunit protein uL11 from Methanococcoides burtonii (strain DSM 6242 / NBRC 107633 / OCM 468 / ACE-M).